The primary structure comprises 437 residues: Vacuolar protein sorting-associated protein 4A (437 aa).

The MIT domain maps to 2–80 (TTSTLQKAID…KDYLRNKEKH (79 aa)). Position 8 is an N6-acetyllysine (Lys8). Residues 15-37 (KATEEDKAKNYEEALRLYQHAVE) adopt a coiled-coil conformation. The tract at residues 75–106 (RNKEKHGKKPVKENQSEGKGSDSDSEGDNPEK) is disordered. Over residues 84-96 (PVKENQSEGKGSD) the composition is skewed to basic and acidic residues. A phosphoserine mark is found at Ser95 and Ser97. 167–174 (GPPGTGKS) provides a ligand contact to ATP.

This sequence belongs to the AAA ATPase family. As to quaternary structure, proposed to be monomeric or homodimeric in nucleotide-free form and to oligomerize upon binding to ATP to form two stacked hexameric or heptameric rings with a central pore through which ESCRT-III substrates are translocated in an ATP-dependent manner. Interacts with CHMP1A, CHMP1B, CHMP2A, CHMP2B, CHMP3, CHMP4A, CHMP4B, CHMP4C and CHMP6. Interacts with VPS4B; the interaction suggests a heteromeric assembly with VPS4B. Interacts with SPAST. Interacts with IST1. Interacts with ZFYVE19/ANCHR; leading to retain it at midbody. Highly expressed in testis and moderately in heart and brain. Not detected in spleen, lung, liver, skeletal muscle or kidney.

The protein localises to the late endosome membrane. It is found in the midbody. Its subcellular location is the cytoplasm. It localises to the cytoskeleton. The protein resides in the spindle. It carries out the reaction ATP + H2O = ADP + phosphate + H(+). Functionally, involved in late steps of the endosomal multivesicular bodies (MVB) pathway. Recognizes membrane-associated ESCRT-III assemblies and catalyzes their disassembly, possibly in combination with membrane fission. Redistributes the ESCRT-III components to the cytoplasm for further rounds of MVB sorting. MVBs contain intraluminal vesicles (ILVs) that are generated by invagination and scission from the limiting membrane of the endosome and mostly are delivered to lysosomes enabling degradation of membrane proteins, such as stimulated growth factor receptors, lysosomal enzymes and lipids. It is required for proper accomplishment of various processes including the regulation of endosome size, primary cilium organization, mitotic spindle organization and chromosome segregation, and nuclear envelope sealing and spindle disassembly during anaphase. In conjunction with the ESCRT machinery also appears to function in topologically equivalent membrane fission events, such as the terminal stages of cytokinesis. Involved in cytokinesis: retained at the midbody by ZFYVE19/ANCHR and CHMP4C until abscission checkpoint signaling is terminated at late cytokinesis. It is then released following dephosphorylation of CHMP4C, leading to abscission. VPS4A/B are required for the exosomal release of SDCBP, CD63 and syndecan. Critical for normal erythroblast cytokinesis and correct erythropoiesis. This is Vacuolar protein sorting-associated protein 4A from Mus musculus (Mouse).